We begin with the raw amino-acid sequence, 99 residues long: L-rhamnose mutarotase (99 aa).

Residue Y18 participates in substrate binding. H22 serves as the catalytic Proton donor. Substrate contacts are provided by residues Y41 and 76–77 (WW).

The protein belongs to the rhamnose mutarotase family. Homodimer.

Its subcellular location is the cytoplasm. The enzyme catalyses alpha-L-rhamnose = beta-L-rhamnose. It participates in carbohydrate metabolism; L-rhamnose metabolism. Its function is as follows. Involved in the anomeric conversion of L-rhamnose. This is L-rhamnose mutarotase from Shigella boydii serotype 18 (strain CDC 3083-94 / BS512).